Reading from the N-terminus, the 64-residue chain is Alpha-conotoxin CnIA (64 aa).

The first 21 residues, 1 to 21 (MGMRMMFTVFLLVVLTTTVVS), serve as a signal peptide directing secretion. Residues 22–47 (FPSDSASDGRDDEAKDERSDIYESKR) constitute a propeptide that is removed on maturation. 2 cysteine pairs are disulfide-bonded: C51–C56 and C52–C62. At P54 the chain carries 4-hydroxyproline; in CnIK; partial. The residue at position 62 (C62) is a Cysteine amide.

Belongs to the conotoxin A superfamily. Expressed by the venom duct.

The protein localises to the secreted. Its function is as follows. Alpha-conotoxins act on postsynaptic membranes, they bind to the nicotinic acetylcholine receptors (nAChR) and thus inhibit them. CnIA and CnIB block muscular nAChR alpha-1/gamma and alpha-1/delta subunits. This chain is Alpha-conotoxin CnIA, found in Conus consors (Singed cone).